The sequence spans 201 residues: Translation initiation factor IF-3 (201 aa).

The interval 167-201 (PHRGAKTRARARHPGEPAGGPPPKPTAGDSKAAPN) is disordered. Residues 169 to 178 (RGAKTRARAR) show a composition bias toward basic residues.

The protein belongs to the IF-3 family. Monomer.

It is found in the cytoplasm. In terms of biological role, IF-3 binds to the 30S ribosomal subunit and shifts the equilibrium between 70S ribosomes and their 50S and 30S subunits in favor of the free subunits, thus enhancing the availability of 30S subunits on which protein synthesis initiation begins. The sequence is that of Translation initiation factor IF-3 from Mycobacterium bovis (strain ATCC BAA-935 / AF2122/97).